Here is a 288-residue protein sequence, read N- to C-terminus: Diaminopimelate epimerase (288 aa).

The substrate site is built by N17, Q47, and N67. The Proton donor role is filled by C76. Substrate is bound by residues 77-78 (GN), N163, N196, and 214-215 (ER). Residue C223 is the Proton acceptor of the active site. 224–225 (GS) contributes to the substrate binding site.

Belongs to the diaminopimelate epimerase family. As to quaternary structure, homodimer.

It is found in the cytoplasm. The enzyme catalyses (2S,6S)-2,6-diaminopimelate = meso-2,6-diaminopimelate. It functions in the pathway amino-acid biosynthesis; L-lysine biosynthesis via DAP pathway; DL-2,6-diaminopimelate from LL-2,6-diaminopimelate: step 1/1. Functionally, catalyzes the stereoinversion of LL-2,6-diaminopimelate (L,L-DAP) to meso-diaminopimelate (meso-DAP), a precursor of L-lysine and an essential component of the bacterial peptidoglycan. This Rhodopseudomonas palustris (strain BisB18) protein is Diaminopimelate epimerase.